We begin with the raw amino-acid sequence, 339 residues long: Erlin-2 (339 aa).

The Cytoplasmic segment spans residues 1–3 (MAQ). The chain crosses the membrane as a helical span at residues 4–24 (LGAVVAVASSFFCASLFSAVH). The Extracellular segment spans residues 25–339 (KIEEGHIGVY…EPLETATKDN (315 aa)). N-linked (GlcNAc...) asparagine glycosylation is present at Asn-106. Residues 177-309 (EAIRRNYELM…DIPNMFMDSA (133 aa)) are interaction with ERLIN1. The residue at position 267 (Lys-267) is an N6-acetyllysine.

It belongs to the band 7/mec-2 family. Forms a heteromeric complex with ERLIN1. In complex with ERLIN1, interacts with RNF170. Interacts with activated ITPR1, independently of the degree of ITPR1 polyubiquitination. Interacts with SCAP, INSIG1, SREBF1 and SREBF2 under cholesterol sufficiency conditions; indicative for an association with the SCAP-SREBP-INSIG complex. Probably part of an AMFR/gp78 and INSIG1-containing ubiquitin ligase complex involved in ERAD of HMGCR. Interacts with TMUB1; TMUB1 bridges the association with AMFR. Interacts with SYVN1 and RNF139. Interacts with TMEM259. Interacts with TMEM41B. Deubiquitinated by USP25; leading to stabilization.

The protein localises to the endoplasmic reticulum membrane. Functionally, component of the ERLIN1/ERLIN2 complex which mediates the endoplasmic reticulum-associated degradation (ERAD) of inositol 1,4,5-trisphosphate receptors (IP3Rs) such as ITPR1. Promotes sterol-accelerated ERAD of HMGCR probably implicating an AMFR/gp78-containing ubiquitin ligase complex. Involved in regulation of cellular cholesterol homeostasis by regulation the SREBP signaling pathway. May promote ER retention of the SCAP-SREBF complex. The polypeptide is Erlin-2 (Rattus norvegicus (Rat)).